Here is a 284-residue protein sequence, read N- to C-terminus: Avenin-like b9 (284 aa).

Positions methionine 1–alanine 18 are cleaved as a signal peptide.

Belongs to the prolamin family. Contains disulfide bonds.

Its function is as follows. Seed storage protein. Might be integrated via inter-chain disulfide bonds within the glutenin polymer. The protein is Avenin-like b9 of Triticum aestivum (Wheat).